The chain runs to 229 residues: MEGASFGAGRAGAAFDPVSFARRPQTLLRVVSWVFSIAVFGPIVNEGYVNSDSGPELRCVFNGNAGACRFGVVLGLGAFIACVAFLLLDVRFQQISSVRDRRRAVLLDLGFSGVWSFLWFVGFCFLTNQWQRTTPGPGTAQAGDAARAAIAFSFFSILSWVALTVKALQRFRLGTDMSLFATDQLGTGAAQAYPGYPVGSGVEGTETYQSPPFTETLDTSSKGYQVPAY.

Methionine 1 bears the N-acetylmethionine mark. The MARVEL domain occupies 20–172 (FARRPQTLLR…LTVKALQRFR (153 aa)). 4 helical membrane-spanning segments follow: residues 30–50 (VVSW…GYVN), 70–90 (FGVV…LLDV), 105–125 (VLLD…GFCF), and 148–168 (AAIA…VKAL). A compositionally biased stretch (polar residues) spans 209–223 (QSPPFTETLDTSSKG). A disordered region spans residues 209 to 229 (QSPPFTETLDTSSKGYQVPAY).

Belongs to the synaptogyrin family. As to quaternary structure, interacts (via N-terminus) with SLC6A3 (via N-terminus). May interact with VMAT2. In terms of tissue distribution, specifically expressed in brain. Found in the brain across the dorsal and ventral corpus striatum as well as in the cortex.

The protein localises to the cytoplasmic vesicle. Its subcellular location is the secretory vesicle. It is found in the synaptic vesicle membrane. It localises to the synapse. In terms of biological role, may play a role in regulated exocytosis. May indirectly regulate the activity of the plasma membrane dopamine transporter SLC6A3 and thereby regulate dopamine transport back from the synaptic cleft into the presynaptic terminal. The protein is Synaptogyrin-3 of Mus musculus (Mouse).